We begin with the raw amino-acid sequence, 260 residues long: Neuraminyllactose-binding hemagglutinin (260 aa).

Positions 1–27 (MKANNHFKDFAWKKCLLGASVVALLVG) are cleaved as a signal peptide. The N-palmitoyl cysteine moiety is linked to residue cysteine 28. A lipid anchor (S-diacylglycerol cysteine) is attached at cysteine 28.

It localises to the cell outer membrane. This is Neuraminyllactose-binding hemagglutinin (hpaA) from Helicobacter pylori (strain ATCC 700392 / 26695) (Campylobacter pylori).